The chain runs to 386 residues: Succinate--CoA ligase [ADP-forming] subunit beta (386 aa).

Positions 9-244 constitute an ATP-grasp domain; that stretch reads KEILKQYGVK…LDEEDEKEIE (236 aa). Residues K46, 53–55, E99, C102, and E107 each bind ATP; that span reads GRG. N199 and D213 together coordinate Mg(2+). Substrate is bound by residues N264 and 321–323; that span reads GIM.

The protein belongs to the succinate/malate CoA ligase beta subunit family. In terms of assembly, heterotetramer of two alpha and two beta subunits. Requires Mg(2+) as cofactor.

It catalyses the reaction succinate + ATP + CoA = succinyl-CoA + ADP + phosphate. The enzyme catalyses GTP + succinate + CoA = succinyl-CoA + GDP + phosphate. It participates in carbohydrate metabolism; tricarboxylic acid cycle; succinate from succinyl-CoA (ligase route): step 1/1. Succinyl-CoA synthetase functions in the citric acid cycle (TCA), coupling the hydrolysis of succinyl-CoA to the synthesis of either ATP or GTP and thus represents the only step of substrate-level phosphorylation in the TCA. The beta subunit provides nucleotide specificity of the enzyme and binds the substrate succinate, while the binding sites for coenzyme A and phosphate are found in the alpha subunit. This Brevibacillus brevis (strain 47 / JCM 6285 / NBRC 100599) protein is Succinate--CoA ligase [ADP-forming] subunit beta.